A 194-amino-acid polypeptide reads, in one-letter code: Endoribonuclease YbeY (194 aa).

His127, His131, and Asp137 together coordinate Zn(2+). The interval 162–194 (PLSNDEDSAPEQDDSFDDDASDSSGGIMSGGVS) is disordered. Over residues 165 to 182 (NDEDSAPEQDDSFDDDAS) the composition is skewed to acidic residues.

Belongs to the endoribonuclease YbeY family. The cofactor is Zn(2+).

The protein resides in the cytoplasm. In terms of biological role, single strand-specific metallo-endoribonuclease involved in late-stage 70S ribosome quality control and in maturation of the 3' terminus of the 16S rRNA. This Rhodopirellula baltica (strain DSM 10527 / NCIMB 13988 / SH1) protein is Endoribonuclease YbeY.